The following is a 1394-amino-acid chain: MAALLRSARWLLRAGAAPRLPLSLRLLPGGPGRLHAASYLPAARAGPVAGGLLSPARLYAIAAKEKDIQEESTFSSRKISNQFDWALMRLDLSVRRTGRIPKKLLQKVFNDTCRSGGLGGSHALLLLRSCGSLLPELKLEERTEFAHRIWDTLQKLGAVYDVSHYNALLKVYLQNEYKFSPTDFLAKMEEANIQPNRVTYQRLIASYCNVGDIEGASKILGFMKTKDLPVTEAVFSALVTGHARAGDMENAENILTVMRDAGIEPGPDTYLALLNAYAEKGDIDHVKQTLEKVEKSELHLMDRDLLQIIFSFSKAGYPQYVSEILEKVTCERRYIPDAMNLILLLVTEKLEDVALQILLACPVSKEDGPSVFGSFFLQHCVTMNTPVEKLTDYCKKLKEVQMHSFPLQFTLHCALLANKTDLAKALMKAVKEEGFPIRPHYFWPLLVGRRKEKNVQGIIEILKGMQELGVHPDQETYTDYVIPCFDSVNSARAILQENGCLSDSDMFSQAGLRSEAANGNLDFVLSFLKSNTLPISLQSIRSSLLLGFRRSMNINLWSEITELLYKDGRYCQEPRGPTEAVGYFLYNLIDSMSDSEVQAKEEHLRQYFHQLEKMNVKIPENIYRGIRNLLESYHVPELIKDAHLLVESKNLDFQKTVQLTSSELESTLETLKAENQPIRDVLKQLILVLCSEENMQKALELKAKYESDMVTGGYAALINLCCRHDKVEDALNLKEEFDRLDSSAVLDTGKYVGLVRVLAKHGKLQDAINILKEMKEKDVLIKDTTALSFFHMLNGAALRGEIETVKQLHEAIVTLGLAEPSTNISFPLVTVHLEKGDLSTALEVAIDCYEKYKVLPRIHDVLCKLVEKGETDLIQKAMDFVSQEQGEMVMLYDLFFAFLQTGNYKEAKKIIETPGIRARSARLQWFCDRCVANNQVETLEKLVELTQKLFECDRDQMYYNLLKLYKINGDWQRADAVWNKIQEENVIPREKTLRLLAEILREGNQEVPFDVPELWYEDEKHSLNSSSASTTEPDFQKDILIACRLNQKKGAYDIFLNAKEQNIVFNAETYSNLIKLLMSEDYFTQAMEVKAFAETHIKGFTLNDAANSRLIITQVRRDYLKEAVTTLKTVLDQQQTPSRLAVTRVIQALAMKGDVENIEVVQKMLNGLEDSIGLSKMVFINNIALAQIKNNNIDAAIENIENMLTSENKVIEPQYFGLAYLFRKVIEEQLEPAVEKISIMAERLANQFAIYKPVTDFFLQLVDAGKVDDARALLQRCGAIAEQTPILLLFLLRNSRKQGKASTVKSVLELIPELNEKEEAYNSLMKSYVSEKDVTSAKALYEHLTAKNTKLDDLFLKRYASLLKYAGEPVPFIEPPESFEFYAQQLRKLRENSS.

The transit peptide at methionine 1 to tyrosine 59 directs the protein to the mitochondrion. PPR repeat units lie at residues leucine 126–tyrosine 160, aspartate 161–proline 195, asparagine 196–valine 230, threonine 231–proline 265, glycine 266–leucine 300, methionine 301–isoleucine 335, histidine 403–isoleucine 437, and arginine 438–proline 472. Lysine 155, lysine 187, and lysine 226 each carry N6-acetyllysine. An N6-acetyllysine modification is found at lysine 292. Residues lysine 463 and lysine 613 each carry the N6-acetyllysine modification. PPR repeat units follow at residues isoleucine 678–methionine 709, valine 710–leucine 746, aspartate 747–threonine 784, threonine 785–proline 820, serine 821–proline 856, and arginine 954–proline 988. Residues glycine 712–alanine 1067 are interaction with BECN1 and Aedes aegypti venom allergen-1. Lysine 726 and lysine 750 each carry N6-acetyllysine. 3 positions are modified to phosphoserine: serine 1026, serine 1027, and serine 1029. PPR repeat units follow at residues threonine 1031–phenylalanine 1065, asparagine 1066–leucine 1102, asparagine 1103–proline 1137, serine 1138–serine 1175, lysine 1176–valine 1210, and lysine 1317–leucine 1351. Residues lysine 1121–serine 1394 form an RNA-binding region. Threonine 1136 bears the Phosphothreonine mark. Serine 1138 bears the Phosphoserine mark.

In terms of assembly, component of mRNP complexes associated with HNRPA1. Component of the complex, at least composed of LRPPRC, BECN1 and BCL2; the interactions prevent BECN1 from forming an autophagy-inducing complex with PIK3C3. Interacts with CECR2, HEBP2, MAP1S and UXT. Interacts with PPARGC1A. Interacts with FOXO1. Interacts (via N-terminus) with EIF4E; the interaction promotes association of EIF4E with 4ESE-containing mRNAs. Interacts with exportin XPO1/CRM1; interacts both alone and in complex with EIF4E and 4ESE-containing mRNAs to form an EIF4E-dependent mRNA export complex. Interacts with importin IPO8; the interaction occurs when LRPPRC is in its RNA-free form and returns LRPPRC to the nucleus for further export rounds. Interacts with BECN1. Interacts with Aedes aegypti venom allergen-1; the interaction interrupts BECN1 and LRPPRC association. Expressed ubiquitously. Expression is highest in heart, skeletal muscle, kidney and liver, intermediate in brain, non-mucosal colon, spleen and placenta, and lowest in small intestine, thymus, lung and peripheral blood leukocytes.

It localises to the mitochondrion. Its subcellular location is the nucleus. The protein localises to the nucleoplasm. It is found in the nucleus inner membrane. The protein resides in the nucleus outer membrane. Functionally, may play a role in RNA metabolism in both nuclei and mitochondria. In the nucleus binds to HNRPA1-associated poly(A) mRNAs and is part of nmRNP complexes at late stages of mRNA maturation which are possibly associated with nuclear mRNA export. Positively modulates nuclear export of mRNAs containing the EIF4E sensitivity element (4ESE) by binding simultaneously to both EIF4E and the 4ESE and acting as a platform for assembly for the RNA export complex. Also binds to exportin XPO1/CRM1 to engage the nuclear pore and traffic the bound mRNAs to the cytoplasm. May bind mature mRNA in the nucleus outer membrane. In mitochondria binds to poly(A) mRNA. Plays a role in translation or stability of mitochondrially encoded cytochrome c oxidase (COX) subunits. May be involved in transcription regulation. Cooperates with PPARGC1A to regulate certain mitochondrially encoded genes and gluconeogenic genes and may regulate docking of PPARGC1A to transcription factors. Seems to be involved in the transcription regulation of the multidrug-related genes MDR1 and MVP. Part of a nuclear factor that binds to the invMED1 element of MDR1 and MVP gene promoters. Binds single-stranded DNA. Required for maintaining mitochondrial potential. Suppresses the initiation of basal levels of autophagy and mitophagy by sustaining BCL2 levels. This is Leucine-rich PPR motif-containing protein, mitochondrial (LRPPRC) from Homo sapiens (Human).